Here is a 215-residue protein sequence, read N- to C-terminus: Probable GTP-binding protein EngB (215 aa).

The 175-residue stretch at 30 to 204 (EGLEVAFAGR…QMVLAQWLGL (175 aa)) folds into the EngB-type G domain. GTP contacts are provided by residues 38–45 (GRSNAGKS), 64–68 (GRTQL), 82–85 (DLPG), 149–152 (TKAD), and 182–185 (LFSA). Mg(2+) is bound by residues S45 and T66.

This sequence belongs to the TRAFAC class TrmE-Era-EngA-EngB-Septin-like GTPase superfamily. EngB GTPase family. Mg(2+) serves as cofactor.

In terms of biological role, necessary for normal cell division and for the maintenance of normal septation. The sequence is that of Probable GTP-binding protein EngB from Pseudomonas paraeruginosa (strain DSM 24068 / PA7) (Pseudomonas aeruginosa (strain PA7)).